The following is a 952-amino-acid chain: Leucine--tRNA ligase (952 aa).

Residues 48–58 (PYLNGVLHAGH) carry the 'HIGH' region motif. The short motif at 644–648 (KLSKS) is the 'KMSKS' region element. Position 647 (Lys-647) interacts with ATP.

It belongs to the class-I aminoacyl-tRNA synthetase family.

It localises to the cytoplasm. It catalyses the reaction tRNA(Leu) + L-leucine + ATP = L-leucyl-tRNA(Leu) + AMP + diphosphate. This chain is Leucine--tRNA ligase, found in Methanococcus vannielii (strain ATCC 35089 / DSM 1224 / JCM 13029 / OCM 148 / SB).